Here is a 267-residue protein sequence, read N- to C-terminus: Thiamine thiazole synthase (267 aa).

Residues serine 41, 60–61, glycine 68, valine 132, and 160–162 each bind NAD(+); these read ER and HVD. Fe cation contacts are provided by aspartate 162 and histidine 177. NAD(+) is bound at residue methionine 227. A glycine-binding site is contributed by arginine 237.

This sequence belongs to the THI4 family. Homooctamer; tetramer of dimers. It depends on Fe(2+) as a cofactor.

It carries out the reaction hydrogen sulfide + glycine + NAD(+) = ADP-5-ethyl-4-methylthiazole-2-carboxylate + nicotinamide + 3 H2O + H(+). Its pathway is cofactor biosynthesis; thiamine diphosphate biosynthesis. Its function is as follows. Involved in the biosynthesis of the thiazole moiety of thiamine. Catalyzes the conversion of NAD and glycine to adenosine diphosphate 5-(2-hydroxyethyl)-4-methylthiazole-2-carboxylate (ADT), an adenylated thiazole intermediate, using free sulfide as a source of sulfur. This is Thiamine thiazole synthase from Saccharolobus islandicus (strain M.14.25 / Kamchatka #1) (Sulfolobus islandicus).